The primary structure comprises 98 residues: Small ribosomal subunit protein bS6 (98 aa).

It belongs to the bacterial ribosomal protein bS6 family.

Functionally, binds together with bS18 to 16S ribosomal RNA. In Staphylococcus haemolyticus (strain JCSC1435), this protein is Small ribosomal subunit protein bS6.